A 288-amino-acid polypeptide reads, in one-letter code: Diaminopimelate epimerase (288 aa).

Substrate contacts are provided by N13, Q46, and N66. C75 (proton donor) is an active-site residue. Substrate-binding positions include 76–77, N166, N199, and 217–218; these read GN and ER. The active-site Proton acceptor is the C226. 227 to 228 lines the substrate pocket; it reads GT.

The protein belongs to the diaminopimelate epimerase family. In terms of assembly, homodimer.

It localises to the cytoplasm. The catalysed reaction is (2S,6S)-2,6-diaminopimelate = meso-2,6-diaminopimelate. It functions in the pathway amino-acid biosynthesis; L-lysine biosynthesis via DAP pathway; DL-2,6-diaminopimelate from LL-2,6-diaminopimelate: step 1/1. In terms of biological role, catalyzes the stereoinversion of LL-2,6-diaminopimelate (L,L-DAP) to meso-diaminopimelate (meso-DAP), a precursor of L-lysine and an essential component of the bacterial peptidoglycan. This is Diaminopimelate epimerase from Cupriavidus necator (strain ATCC 17699 / DSM 428 / KCTC 22496 / NCIMB 10442 / H16 / Stanier 337) (Ralstonia eutropha).